The chain runs to 685 residues: Phenoloxidase subunit 1 (685 aa).

The propeptide occupies 1–51 (MSDAKNNLLLFFDRPSEPCFMQKGEENAVFEIPDNYYPEKYQRVSNAIGNR). N-linked (GlcNAc...) asparagine glycosylation occurs at asparagine 184. Cu cation is bound by residues histidine 209, histidine 213, and histidine 239. N-linked (GlcNAc...) asparagine glycosylation is found at asparagine 254 and asparagine 324. The active-site Proton acceptor is the glutamate 351. Cu cation contacts are provided by histidine 366, histidine 370, and histidine 406. N-linked (GlcNAc...) asparagine glycans are attached at residues asparagine 491 and asparagine 540. 2 disulfide bridges follow: cysteine 581/cysteine 623 and cysteine 583/cysteine 630.

Heterodimer. Cu(2+) serves as cofactor. In terms of processing, the N-terminus is blocked. In terms of tissue distribution, synthesized by hemocytes and released into the hemolymph plasma.

The protein resides in the secreted. It carries out the reaction 2 L-dopa + O2 = 2 L-dopaquinone + 2 H2O. The catalysed reaction is L-tyrosine + O2 = L-dopaquinone + H2O. Functionally, this is a copper-containing oxidase that functions in the formation of pigments such as melanins and other polyphenolic compounds. Catalyzes the rate-limiting conversions of tyrosine to DOPA, DOPA to DOPA-quinone and possibly 5,6 dihydroxyindole to indole-5'6 quinone. This chain is Phenoloxidase subunit 1, found in Bombyx mori (Silk moth).